Consider the following 411-residue polypeptide: Argininosuccinate synthase (411 aa).

Residues 15–23 (AYSGGLDTS) and Ala-42 each bind ATP. L-citrulline is bound by residues Tyr-93 and Ser-98. Gly-123 is an ATP binding site. 3 residues coordinate L-aspartate: Thr-125, Asn-129, and Asp-130. Position 129 (Asn-129) interacts with L-citrulline. Residues Arg-133, Ser-185, Ser-194, Glu-270, and Tyr-282 each coordinate L-citrulline.

It belongs to the argininosuccinate synthase family. Type 1 subfamily. In terms of assembly, homotetramer.

It is found in the cytoplasm. The enzyme catalyses L-citrulline + L-aspartate + ATP = 2-(N(omega)-L-arginino)succinate + AMP + diphosphate + H(+). It functions in the pathway amino-acid biosynthesis; L-arginine biosynthesis; L-arginine from L-ornithine and carbamoyl phosphate: step 2/3. In Psychrobacter sp. (strain PRwf-1), this protein is Argininosuccinate synthase.